A 300-amino-acid chain; its full sequence is HTH-type transcriptional regulator ArgP (300 aa).

The region spanning 4-60 (PDYRTLQALDAVIRERGFERAAQKLCITQSAVSQRIKQLENLFGQPLLVRTVPPRPT) is the HTH lysR-type domain. Residues 21-40 (FERAAQKLCITQSAVSQRIK) constitute a DNA-binding region (H-T-H motif).

The protein belongs to the LysR transcriptional regulatory family. Homodimer.

In terms of biological role, controls the transcription of genes involved in arginine and lysine metabolism. The polypeptide is HTH-type transcriptional regulator ArgP (Photorhabdus laumondii subsp. laumondii (strain DSM 15139 / CIP 105565 / TT01) (Photorhabdus luminescens subsp. laumondii)).